The chain runs to 489 residues: Phenylalanine--tRNA ligase alpha subunit (489 aa).

Residues Thr-316, 355–357 (QLD), Phe-395, and Phe-420 contribute to the L-phenylalanine site.

The protein belongs to the class-II aminoacyl-tRNA synthetase family. Phe-tRNA synthetase alpha subunit type 2 subfamily. Tetramer of two alpha and two beta subunits. Mg(2+) serves as cofactor.

The protein localises to the cytoplasm. It carries out the reaction tRNA(Phe) + L-phenylalanine + ATP = L-phenylalanyl-tRNA(Phe) + AMP + diphosphate + H(+). The chain is Phenylalanine--tRNA ligase alpha subunit from Pyrobaculum aerophilum (strain ATCC 51768 / DSM 7523 / JCM 9630 / CIP 104966 / NBRC 100827 / IM2).